A 30-amino-acid chain; its full sequence is Dermaseptin-S3 (30 aa).

This sequence belongs to the frog skin active peptide (FSAP) family. Dermaseptin subfamily. As to quaternary structure, monomer and oligomer. Forms aggregates in aqueous environments. In terms of tissue distribution, expressed by the skin glands.

The protein localises to the secreted. Functionally, potent antimicrobial peptide with activity against bacteria and protozoa. Also has activity against fungi. Probably acts by disturbing membrane functions with its amphipathic structure. Binds to healthy erythrocytes (this binding is receptor independent), but has very weak hemolytic activity. Does not bind to P.falciparum infected erythrocytes, but accumulates within the parasite. Kills the parasite, but has no hemolytic activity on the host cell. In Phyllomedusa sauvagei (Sauvage's leaf frog), this protein is Dermaseptin-S3.